A 215-amino-acid chain; its full sequence is 3-demethoxyubiquinol 3-hydroxylase (215 aa).

Glu64, Glu94, His97, Glu146, Glu178, and His181 together coordinate Fe cation.

The protein belongs to the COQ7 family. The cofactor is Fe cation.

Its subcellular location is the cell membrane. The enzyme catalyses a 5-methoxy-2-methyl-3-(all-trans-polyprenyl)benzene-1,4-diol + AH2 + O2 = a 3-demethylubiquinol + A + H2O. The protein operates within cofactor biosynthesis; ubiquinone biosynthesis. Catalyzes the hydroxylation of 2-nonaprenyl-3-methyl-6-methoxy-1,4-benzoquinol during ubiquinone biosynthesis. This is 3-demethoxyubiquinol 3-hydroxylase from Pseudomonas putida (strain GB-1).